A 552-amino-acid polypeptide reads, in one-letter code: Glycosyltransferase family 92 protein RCOM_0530710 (552 aa).

A helical; Signal-anchor transmembrane segment spans residues 12–34; the sequence is WNRFFWCTLLLVLSCVLFTASTF. Positions 277 to 520 constitute a GT92 domain; that stretch reads KPHEMCICTM…GTRAVEPPDW (244 aa).

The protein belongs to the glycosyltransferase 92 family.

The protein resides in the membrane. The protein is Glycosyltransferase family 92 protein RCOM_0530710 of Ricinus communis (Castor bean).